The primary structure comprises 306 residues: Non-specific ribonucleoside hydrolase RihC (306 aa).

Histidine 235 is an active-site residue.

It belongs to the IUNH family. RihC subfamily.

Its function is as follows. Hydrolyzes both purine and pyrimidine ribonucleosides with a broad-substrate specificity. The polypeptide is Non-specific ribonucleoside hydrolase RihC (Salmonella paratyphi C (strain RKS4594)).